A 217-amino-acid polypeptide reads, in one-letter code: Uracil-DNA glycosylase (217 aa).

The Proton acceptor role is filled by aspartate 62.

It belongs to the uracil-DNA glycosylase (UDG) superfamily. UNG family.

Its subcellular location is the cytoplasm. The enzyme catalyses Hydrolyzes single-stranded DNA or mismatched double-stranded DNA and polynucleotides, releasing free uracil.. Its function is as follows. Excises uracil residues from the DNA which can arise as a result of misincorporation of dUMP residues by DNA polymerase or due to deamination of cytosine. This is Uracil-DNA glycosylase from Streptococcus pneumoniae (strain P1031).